The following is a 103-amino-acid chain: Large ribosomal subunit protein bL21 (103 aa).

Belongs to the bacterial ribosomal protein bL21 family. In terms of assembly, part of the 50S ribosomal subunit. Contacts protein L20.

Functionally, this protein binds to 23S rRNA in the presence of protein L20. This is Large ribosomal subunit protein bL21 from Lactobacillus johnsonii (strain CNCM I-12250 / La1 / NCC 533).